The chain runs to 633 residues: Chaperone protein DnaK (633 aa).

Threonine 198 carries the post-translational modification Phosphothreonine; by autocatalysis.

It belongs to the heat shock protein 70 family.

Acts as a chaperone. This chain is Chaperone protein DnaK, found in Rhodopseudomonas palustris (strain BisA53).